Consider the following 403-residue polypeptide: MLWPLPLFLLCAGSLAQDLEFQLVAPESVTVEEGLCVHVPCSVFYPSIKLTLGPVTGSWLRKGVSLHEDSPVATSDPRQLVQKATQGRFQLLGDPQKHDCSLFIRDAQKNDTGMYFFRVVREPFVRYSYKKSQLSLHVTSLSRTPDIIIPGTLEAGYPSNLTCSVPWACEQGTPPTFSWMSTALTSLSSRTTDSSVLTFTPQPQDHGTKLTCLVTFSGAGVTVERTIQLNVTRKSGQMRELVLVAVGEATVKLLILGLCLVFLIVMFCRRKTTKLSVHMGCENPIKRQEAITSYNHCLSPTASDAVTPGCSIHRLISRTPRCTAILRIQDPYRRTHLRNRAVSTLRFPWISWEGSLRSTQRSKCTKLCSPVKNLCPLWLPVDNSCIPLIPEWVMLLCVSLTLS.

Positions 1–16 (MLWPLPLFLLCAGSLA) are cleaved as a signal peptide. One can recognise an Ig-like V-type domain in the interval 17-120 (QDLEFQLVAP…DTGMYFFRVV (104 aa)). At 18-240 (DLEFQLVAPE…VTRKSGQMRE (223 aa)) the chain is on the extracellular side. 3 cysteine pairs are disulfide-bonded: C36–C169, C41–C100, and C163–C212. Residue N110 is glycosylated (N-linked (GlcNAc...) asparagine). Residue R118 participates in N-acetylneuraminate binding. The 84-residue stretch at 145–228 (PDIIIPGTLE…AGVTVERTIQ (84 aa)) folds into the Ig-like C2-type domain. N160 carries N-linked (GlcNAc...) asparagine glycosylation. N230 carries N-linked (GlcNAc...) asparagine glycosylation. Residues 241 to 267 (LVLVAVGEATVKLLILGLCLVFLIVMF) form a helical membrane-spanning segment. Residues 268 to 403 (CRRKTTKLSV…MLLCVSLTLS (136 aa)) lie on the Cytoplasmic side of the membrane.

Belongs to the immunoglobulin superfamily. SIGLEC (sialic acid binding Ig-like lectin) family. As to quaternary structure, homodimer; disulfide-linked. Interacts with PTPN6/SHP-1 and PTPN11/SHP-2 upon phosphorylation. Interacts with C1QA (via C-terminus); this interaction activates CD33 inhibitory motifs. Post-translationally, glycosylated. In terms of processing, phosphorylation is involved in binding to PTPN6 and PTPN11. In terms of tissue distribution, expressed on myeloid precursors in the bone marrow. In the peripheral blood, mostly expressed on granulocytes.

It localises to the cell membrane. Its function is as follows. Sialic-acid-binding immunoglobulin-like lectin (Siglec) that plays a role in mediating cell-cell interactions and in maintaining immune cells in a resting state. Preferentially binds sialic acid to the short O-linked glycans of certain mucins. This Mus musculus (Mouse) protein is Myeloid cell surface antigen CD33 (Cd33).